Consider the following 388-residue polypeptide: Dual-specificity RNA methyltransferase RlmN (388 aa).

Residue glutamate 109 is the Proton acceptor of the active site. The Radical SAM core domain maps to 115–354 (EEDRATLCVS…TIVRKTRGDD (240 aa)). A disulfide bond links cysteine 122 and cysteine 359. [4Fe-4S] cluster is bound by residues cysteine 129, cysteine 133, and cysteine 136. S-adenosyl-L-methionine contacts are provided by residues 183 to 184 (GE), serine 215, 237 to 239 (SLH), and asparagine 316. Catalysis depends on cysteine 359, which acts as the S-methylcysteine intermediate.

The protein belongs to the radical SAM superfamily. RlmN family. [4Fe-4S] cluster is required as a cofactor.

The protein localises to the cytoplasm. It carries out the reaction adenosine(2503) in 23S rRNA + 2 reduced [2Fe-2S]-[ferredoxin] + 2 S-adenosyl-L-methionine = 2-methyladenosine(2503) in 23S rRNA + 5'-deoxyadenosine + L-methionine + 2 oxidized [2Fe-2S]-[ferredoxin] + S-adenosyl-L-homocysteine. The enzyme catalyses adenosine(37) in tRNA + 2 reduced [2Fe-2S]-[ferredoxin] + 2 S-adenosyl-L-methionine = 2-methyladenosine(37) in tRNA + 5'-deoxyadenosine + L-methionine + 2 oxidized [2Fe-2S]-[ferredoxin] + S-adenosyl-L-homocysteine. Its function is as follows. Specifically methylates position 2 of adenine 2503 in 23S rRNA and position 2 of adenine 37 in tRNAs. m2A2503 modification seems to play a crucial role in the proofreading step occurring at the peptidyl transferase center and thus would serve to optimize ribosomal fidelity. The sequence is that of Dual-specificity RNA methyltransferase RlmN from Klebsiella pneumoniae (strain 342).